The following is a 325-amino-acid chain: Isoaspartyl peptidase/L-asparaginase (325 aa).

Threonine 193 (nucleophile) is an active-site residue. Residues 221–224 (RIGD) and 243–246 (TGKG) contribute to the substrate site.

The protein belongs to the Ntn-hydrolase family. Heterotetramer of two alpha and two beta chains arranged as a dimer of alpha/beta heterodimers. In terms of processing, cleaved into an alpha and beta chain by autocatalysis; this activates the enzyme. The N-terminal residue of the beta subunit is responsible for the nucleophile hydrolase activity. Expressed in ripening seeds and developing nodules.

It catalyses the reaction Cleavage of a beta-linked Asp residue from the N-terminus of a polypeptide.. Its function is as follows. Degrades proteins damaged by L-isoaspartyl residue formation (also known as beta-Asp residues). Also has L-asparaginase activity, which is used to liberate stored nitrogen during seed development. This is Isoaspartyl peptidase/L-asparaginase from Lupinus luteus (European yellow lupine).